Here is a 189-residue protein sequence, read N- to C-terminus: Elongation factor P (189 aa).

Position 35 is an N6-(3,6-diaminohexanoyl)-5-hydroxylysine (K35).

Belongs to the elongation factor P family. Post-translationally, may be beta-lysylated on the epsilon-amino group of Lys-35 by the combined action of EpmA and EpmB, and then hydroxylated on the C5 position of the same residue by EpmC (if this protein is present). Lysylation is critical for the stimulatory effect of EF-P on peptide-bond formation. The lysylation moiety may extend toward the peptidyltransferase center and stabilize the terminal 3-CCA end of the tRNA. Hydroxylation of the C5 position on Lys-35 may allow additional potential stabilizing hydrogen-bond interactions with the P-tRNA.

The protein resides in the cytoplasm. The protein operates within protein biosynthesis; polypeptide chain elongation. In terms of biological role, involved in peptide bond synthesis. Alleviates ribosome stalling that occurs when 3 or more consecutive Pro residues or the sequence PPG is present in a protein, possibly by augmenting the peptidyl transferase activity of the ribosome. Modification of Lys-35 is required for alleviation. The sequence is that of Elongation factor P from Wigglesworthia glossinidia brevipalpis.